Here is an 82-residue protein sequence, read N- to C-terminus: Penaeidin-3g (82 aa).

The signal sequence occupies residues 1–19; the sequence is MRLVVCLVFLASFALVCQG. Q20 carries the pyrrolidone carboxylic acid modification. 3 disulfide bridges follow: C51–C66, C55–C73, and C67–C74. Serine amide is present on S81.

Belongs to the penaeidin family.

It localises to the cytoplasmic granule. Antibacterial and antifungal activity. Presents chitin-binding activity. This chain is Penaeidin-3g, found in Penaeus vannamei (Whiteleg shrimp).